The chain runs to 200 residues: CASP-like protein 1U2 (200 aa).

The Cytoplasmic segment spans residues 1–33 (MAEPVIVVPRKGVYSDDSYHHHHRHHSFHSCTN). Residues 34-54 (FLLRTLTAGATAAAVVVMLIS) form a helical membrane-spanning segment. Residues 55-77 (TQTSGTIYGYFRGRWRDYPAYKW) are Extracellular-facing. Residues 78–98 (LIIANAVVFVYSVMAAIVACF) form a helical membrane-spanning segment. At 99-120 (SVIARRGPLSYSPSAWLTLLVD) the chain is on the cytoplasmic side. The chain crosses the membrane as a helical span at residues 121 to 141 (FLAASALISAASAALAVALLA). The Extracellular segment spans residues 142–168 (RNGQDLQGTHYWPTVCNYVSKFCDYTQ). The helical transmembrane segment at 169–189 (GAIIASFVGFGLLFLSTLLAA) threads the bilayer. Over 190–200 (SALYHLSHRRH) the chain is Cytoplasmic.

It belongs to the Casparian strip membrane proteins (CASP) family. As to quaternary structure, homodimer and heterodimers.

It is found in the cell membrane. This is CASP-like protein 1U2 from Physcomitrium patens (Spreading-leaved earth moss).